Consider the following 293-residue polypeptide: Ribosomal RNA small subunit methyltransferase A (293 aa).

6 residues coordinate S-adenosyl-L-methionine: N33, V35, G60, E81, D111, and N130.

It belongs to the class I-like SAM-binding methyltransferase superfamily. rRNA adenine N(6)-methyltransferase family. RsmA subfamily.

Its subcellular location is the cytoplasm. It carries out the reaction adenosine(1518)/adenosine(1519) in 16S rRNA + 4 S-adenosyl-L-methionine = N(6)-dimethyladenosine(1518)/N(6)-dimethyladenosine(1519) in 16S rRNA + 4 S-adenosyl-L-homocysteine + 4 H(+). In terms of biological role, specifically dimethylates two adjacent adenosines (A1518 and A1519) in the loop of a conserved hairpin near the 3'-end of 16S rRNA in the 30S particle. May play a critical role in biogenesis of 30S subunits. The polypeptide is Ribosomal RNA small subunit methyltransferase A (Corynebacterium glutamicum (strain ATCC 13032 / DSM 20300 / JCM 1318 / BCRC 11384 / CCUG 27702 / LMG 3730 / NBRC 12168 / NCIMB 10025 / NRRL B-2784 / 534)).